We begin with the raw amino-acid sequence, 132 residues long: Small ribosomal subunit protein eS6 (132 aa).

Belongs to the eukaryotic ribosomal protein eS6 family.

The chain is Small ribosomal subunit protein eS6 from Methanoculleus marisnigri (strain ATCC 35101 / DSM 1498 / JR1).